A 335-amino-acid polypeptide reads, in one-letter code: UDP-3-O-acylglucosamine N-acyltransferase (335 aa).

The Proton acceptor role is filled by His-225.

This sequence belongs to the transferase hexapeptide repeat family. LpxD subfamily. As to quaternary structure, homotrimer.

The catalysed reaction is a UDP-3-O-[(3R)-3-hydroxyacyl]-alpha-D-glucosamine + a (3R)-hydroxyacyl-[ACP] = a UDP-2-N,3-O-bis[(3R)-3-hydroxyacyl]-alpha-D-glucosamine + holo-[ACP] + H(+). The protein operates within bacterial outer membrane biogenesis; LPS lipid A biosynthesis. Functionally, catalyzes the N-acylation of UDP-3-O-acylglucosamine using 3-hydroxyacyl-ACP as the acyl donor. Is involved in the biosynthesis of lipid A, a phosphorylated glycolipid that anchors the lipopolysaccharide to the outer membrane of the cell. This is UDP-3-O-acylglucosamine N-acyltransferase from Delftia acidovorans (strain DSM 14801 / SPH-1).